Reading from the N-terminus, the 1074-residue chain is Semaphorin-5A (1074 aa).

Residues 1 to 22 form the signal peptide; it reads MKGTCVIAWLFSSLGLWRLAHP. The Extracellular segment spans residues 23-968; the sequence is EAQGTTQCQR…EEKRCGEFNM (946 aa). The Sema domain occupies 35 to 484; it reads HPVISYKEIG…LREHVVKIPL (450 aa). 2 disulfide bridges follow: C104–C114 and C131–C140. N-linked (GlcNAc...) asparagine glycans are attached at residues N142, N168, N227, and N277. Disulfide bonds link C254–C357 and C278–C320. Residues N323, N367, and N437 are each glycosylated (N-linked (GlcNAc...) asparagine). Cystine bridges form between C487–C504 and C496–C513. N-linked (GlcNAc...) asparagine glycosylation is found at N536 and N591. TSP type-1 domains are found at residues 540–593, 595–651, 653–702, 707–765, 784–839, 841–896, and 897–944; these read DGHF…ANCS, NGGW…LLCP, HMFW…NPCP, TTPW…GCST, NGAW…LPCP, DGVW…QPCP, and ESWS…VFDS. 6 disulfide bridges follow: C607-C644, C611-C650, C622-C634, C665-C696, C669-C701, and C680-C686. N717 is a glycosylation site (N-linked (GlcNAc...) asparagine). 6 disulfide bridges follow: C796-C833, C800-C838, C811-C823, C853-C890, C857-C895, and C868-C880. N-linked (GlcNAc...) asparagine glycosylation is present at N933. The chain crosses the membrane as a helical span at residues 969-989; sequence FHMIAVGLSSSILGCLLTLLV. Residues 990–1074 are Cytoplasmic-facing; sequence YTYCQRYQQQ…FTDLNNYDEY (85 aa).

Belongs to the semaphorin family. In terms of assembly, binds PLXNB3.

The protein resides in the membrane. Bifunctional axonal guidance cue regulated by sulfated proteoglycans; attractive effects result from interactions with heparan sulfate proteoglycans (HSPGs), while the inhibitory effects depend on interactions with chondroitin sulfate proteoglycans (CSPGs). Ligand for receptor PLXNB3. In glioma cells, SEMA5A stimulation of PLXNB3 results in the disassembly of F-actin stress fibers, disruption of focal adhesions and cellular collapse as well as inhibition of cell migration and invasion through ARHGDIA-mediated inactivation of RAC1. May promote angiogenesis by increasing endothelial cell proliferation and migration and inhibiting apoptosis. In Homo sapiens (Human), this protein is Semaphorin-5A (SEMA5A).